Here is a 383-residue protein sequence, read N- to C-terminus: S-(hydroxymethyl)glutathione dehydrogenase (383 aa).

Cysteine 51 is a Zn(2+) binding site. Histidine 52 contacts NAD(+). Histidine 73, glutamate 74, cysteine 103, cysteine 106, cysteine 109, cysteine 117, and cysteine 180 together coordinate Zn(2+). NAD(+)-binding positions include 205–210 (GAGCVG), aspartate 229, and 298–300 (IGV).

This sequence belongs to the zinc-containing alcohol dehydrogenase family. Class-III subfamily. Zn(2+) is required as a cofactor.

The catalysed reaction is a primary alcohol + NAD(+) = an aldehyde + NADH + H(+). It catalyses the reaction a secondary alcohol + NAD(+) = a ketone + NADH + H(+). It carries out the reaction S-(hydroxymethyl)glutathione + NADP(+) = S-formylglutathione + NADPH + H(+). The enzyme catalyses S-(hydroxymethyl)glutathione + NAD(+) = S-formylglutathione + NADH + H(+). The catalysed reaction is S-nitrosoglutathione + NADH + H(+) = S-(hydroxysulfenamide)glutathione + NAD(+). Its function is as follows. Oxidizes long-chain alcohols and, in the presence of glutathione, is able to oxidize formaldehyde. Also acts as a S-nitroso-glutathione reductase by catalyzing the NADH-dependent reduction of S-nitrosoglutathione, thereby regulating protein S-nitrosylation. This is S-(hydroxymethyl)glutathione dehydrogenase (FDH1) from Aspergillus oryzae (strain ATCC 42149 / RIB 40) (Yellow koji mold).